Reading from the N-terminus, the 357-residue chain is UDP-N-acetylglucosamine--N-acetylmuramyl-(pentapeptide) pyrophosphoryl-undecaprenol N-acetylglucosamine transferase (357 aa).

UDP-N-acetyl-alpha-D-glucosamine-binding positions include 13–15, N125, R161, S189, I243, and Q288; that span reads TGG.

It belongs to the glycosyltransferase 28 family. MurG subfamily.

It localises to the cell inner membrane. The enzyme catalyses di-trans,octa-cis-undecaprenyl diphospho-N-acetyl-alpha-D-muramoyl-L-alanyl-D-glutamyl-meso-2,6-diaminopimeloyl-D-alanyl-D-alanine + UDP-N-acetyl-alpha-D-glucosamine = di-trans,octa-cis-undecaprenyl diphospho-[N-acetyl-alpha-D-glucosaminyl-(1-&gt;4)]-N-acetyl-alpha-D-muramoyl-L-alanyl-D-glutamyl-meso-2,6-diaminopimeloyl-D-alanyl-D-alanine + UDP + H(+). The protein operates within cell wall biogenesis; peptidoglycan biosynthesis. Cell wall formation. Catalyzes the transfer of a GlcNAc subunit on undecaprenyl-pyrophosphoryl-MurNAc-pentapeptide (lipid intermediate I) to form undecaprenyl-pyrophosphoryl-MurNAc-(pentapeptide)GlcNAc (lipid intermediate II). This is UDP-N-acetylglucosamine--N-acetylmuramyl-(pentapeptide) pyrophosphoryl-undecaprenol N-acetylglucosamine transferase from Bordetella parapertussis (strain 12822 / ATCC BAA-587 / NCTC 13253).